A 173-amino-acid chain; its full sequence is Translation initiation factor IF-3 (173 aa).

Belongs to the IF-3 family. In terms of assembly, monomer.

The protein localises to the cytoplasm. Functionally, IF-3 binds to the 30S ribosomal subunit and shifts the equilibrium between 70S ribosomes and their 50S and 30S subunits in favor of the free subunits, thus enhancing the availability of 30S subunits on which protein synthesis initiation begins. The chain is Translation initiation factor IF-3 from Methylobacterium sp. (strain 4-46).